A 357-amino-acid polypeptide reads, in one-letter code: UDP-N-acetylglucosamine--N-acetylmuramyl-(pentapeptide) pyrophosphoryl-undecaprenol N-acetylglucosamine transferase (357 aa).

Residues 15–17, Asn-124, Arg-165, Ser-191, and Gln-285 each bind UDP-N-acetyl-alpha-D-glucosamine; that span reads TGG.

This sequence belongs to the glycosyltransferase 28 family. MurG subfamily.

The protein localises to the cell inner membrane. The enzyme catalyses di-trans,octa-cis-undecaprenyl diphospho-N-acetyl-alpha-D-muramoyl-L-alanyl-D-glutamyl-meso-2,6-diaminopimeloyl-D-alanyl-D-alanine + UDP-N-acetyl-alpha-D-glucosamine = di-trans,octa-cis-undecaprenyl diphospho-[N-acetyl-alpha-D-glucosaminyl-(1-&gt;4)]-N-acetyl-alpha-D-muramoyl-L-alanyl-D-glutamyl-meso-2,6-diaminopimeloyl-D-alanyl-D-alanine + UDP + H(+). It functions in the pathway cell wall biogenesis; peptidoglycan biosynthesis. Its function is as follows. Cell wall formation. Catalyzes the transfer of a GlcNAc subunit on undecaprenyl-pyrophosphoryl-MurNAc-pentapeptide (lipid intermediate I) to form undecaprenyl-pyrophosphoryl-MurNAc-(pentapeptide)GlcNAc (lipid intermediate II). This Microcystis aeruginosa (strain NIES-843 / IAM M-2473) protein is UDP-N-acetylglucosamine--N-acetylmuramyl-(pentapeptide) pyrophosphoryl-undecaprenol N-acetylglucosamine transferase.